The sequence spans 278 residues: 4-deoxy-L-threo-5-hexosulose-uronate ketol-isomerase (278 aa).

4 residues coordinate Zn(2+): His-196, His-198, Glu-203, and His-245.

Belongs to the KduI family. Homohexamer. Zn(2+) serves as cofactor.

It catalyses the reaction 5-dehydro-4-deoxy-D-glucuronate = 3-deoxy-D-glycero-2,5-hexodiulosonate. The protein operates within glycan metabolism; pectin degradation; 2-dehydro-3-deoxy-D-gluconate from pectin: step 4/5. In terms of biological role, catalyzes the isomerization of 5-dehydro-4-deoxy-D-glucuronate to 3-deoxy-D-glycero-2,5-hexodiulosonate. This is 4-deoxy-L-threo-5-hexosulose-uronate ketol-isomerase from Escherichia coli O139:H28 (strain E24377A / ETEC).